The chain runs to 592 residues: Putative esterase (592 aa).

A helical membrane pass occupies residues 12-32 (LTLIAYLSVLMGVSVYFYVLI). N-linked (GlcNAc...) asparagine; by host glycans are attached at residues N68, N83, N95, N447, and N510. The active-site Charge relay system is H513. N528 carries N-linked (GlcNAc...) asparagine; by host glycosylation.

It belongs to the type-B carboxylesterase/lipase family.

It is found in the membrane. It carries out the reaction a carboxylic ester + H2O = an alcohol + a carboxylate + H(+). The chain is Putative esterase from Spodoptera frugiperda (Fall armyworm).